The following is a 667-amino-acid chain: Gamma-tubulin complex component 4 (667 aa).

The interval 425–445 (HKADATQAREGPSRETSPREA) is disordered.

Belongs to the TUBGCP family. Component of the gamma-tubulin ring complex (gTuRC) consisting of TUBGCP2, TUBGCP3, TUBGCP4, TUBGCP5 and TUBGCP6 and gamma-tubulin TUBG1 or TUBG2. TUBGCP2, TUBGCP3, TUBGCP4, TUBGCP5 and TUBGCP6 assemble in a 5:5:2:1:1 stoichiometry; each is associated with a gamma-tubulin, thereby arranging 14 gamma-tubulins in a helical manner. Gamma-tubulin at the first position is blocked by TUBGCP3 at the last position, allowing 13 protafilaments to grow into a microtubule. The gTuRC (via TUBGCP3 and TUBGCP6) interacts with ACTB and MZT1; the interactions form a luminal bridge that stabilizes the initial structure during complex assembly. The gTuRC (via TUBGCP2) interacts with MZT2A/MZT2B and CDK5RAP2 (via CM1 motif); the interactions play a role in gTuRC activation. Interacts with NINL. Interacts with ATF5; the ATF5:PCNT:polyglutamylated tubulin (PGT) tripartite unites the mother centriole and the pericentriolar material (PCM) in the centrosome. In terms of tissue distribution, ubiquitously expressed.

It is found in the cytoplasm. The protein localises to the cytoskeleton. Its subcellular location is the microtubule organizing center. It localises to the centrosome. In terms of biological role, component of the gamma-tubulin ring complex (gTuRC) which mediates microtubule nucleation. The gTuRC regulates the minus-end nucleation of alpha-beta tubulin heterodimers that grow into microtubule protafilaments, a critical step in centrosome duplication and spindle formation. This Homo sapiens (Human) protein is Gamma-tubulin complex component 4 (TUBGCP4).